The chain runs to 784 residues: 1-phosphatidylinositol 4,5-bisphosphate phosphodiesterase delta-3-A (784 aa).

The interval 1 to 25 (MLGRKKNPETVQTESKSVESKTHDP) is disordered. A compositionally biased stretch (basic and acidic residues) spans 16–25 (KSVESKTHDP). In terms of domain architecture, PH spans 38–149 (LLMLQGSKMM…WVRGIRTLKD (112 aa)). The segment at 48–78 (KVRSQRWRKDRRLKLLEDCVTVWCESSKTSR) is substrate binding. EF-hand domains follow at residues 159–194 (KLDHWIRGYLRRADQNQDGKMSYDEVKHLLQLINID), 195–230 (LNEQYARTLFKKCDRSCDGRLDHVEIEEFCREMMRR), and 227–262 (MMRRPELDAVFRHYSGNGCVLTTLELRDFLGDQGED). Residues D172, N174, D176, K178, E183, D208, S210, D212, R214, and E219 each contribute to the Ca(2+) site. The region spanning 313-458 (QDMSKPLAHY…LKGRILLKGK (146 aa)) is the PI-PLC X-box domain. Residue H328 is part of the active site. N329, E358, and D360 together coordinate Ca(2+). H373 is a catalytic residue. E407 contacts Ca(2+). 2 residues coordinate substrate: K456 and K458. Residues 473 to 498 (FTNSSDEESVAGGNKKESKKDLARSA) are disordered. Positions 486-495 (NKKESKKDLA) are enriched in basic and acidic residues. The PI-PLC Y-box domain occupies 506 to 621 (LSDLVVYCQS…GYVLKPEFLC (116 aa)). The substrate site is built by S534 and R561. The C2 domain maps to 621 to 750 (CDPKSDFDPE…TGYRHVHLLK (130 aa)). Ca(2+) is bound by residues I664, D666, N690, D719, and D721.

Requires Ca(2+) as cofactor.

The protein localises to the membrane. Its subcellular location is the cytoplasm. It is found in the cleavage furrow. The catalysed reaction is a 1,2-diacyl-sn-glycero-3-phospho-(1D-myo-inositol-4,5-bisphosphate) + H2O = 1D-myo-inositol 1,4,5-trisphosphate + a 1,2-diacyl-sn-glycerol + H(+). Hydrolyzes the phosphatidylinositol 4,5-bisphosphate (PIP2) to generate 2 second messenger molecules diacylglycerol (DAG) and inositol 1,4,5-trisphosphate (IP3). DAG mediates the activation of protein kinase C (PKC), while IP3 releases Ca(2+) from intracellular stores. The sequence is that of 1-phosphatidylinositol 4,5-bisphosphate phosphodiesterase delta-3-A (plcd3a) from Danio rerio (Zebrafish).